The primary structure comprises 171 residues: Co-chaperone protein HscB (171 aa).

In terms of domain architecture, J spans 2 to 74 (DYFTLFGLPA…LARAEYLLSL (73 aa)).

Belongs to the HscB family. In terms of assembly, interacts with HscA and stimulates its ATPase activity. Interacts with IscU.

Co-chaperone involved in the maturation of iron-sulfur cluster-containing proteins. Seems to help targeting proteins to be folded toward HscA. The chain is Co-chaperone protein HscB from Enterobacter sp. (strain 638).